The sequence spans 194 residues: Imidazoleglycerol-phosphate dehydratase (194 aa).

Belongs to the imidazoleglycerol-phosphate dehydratase family.

It localises to the cytoplasm. The catalysed reaction is D-erythro-1-(imidazol-4-yl)glycerol 3-phosphate = 3-(imidazol-4-yl)-2-oxopropyl phosphate + H2O. Its pathway is amino-acid biosynthesis; L-histidine biosynthesis; L-histidine from 5-phospho-alpha-D-ribose 1-diphosphate: step 6/9. This is Imidazoleglycerol-phosphate dehydratase from Sulfurisphaera tokodaii (strain DSM 16993 / JCM 10545 / NBRC 100140 / 7) (Sulfolobus tokodaii).